Consider the following 1216-residue polypeptide: Probable cation-transporting ATPase 13A5 (1216 aa).

The next 5 membrane-spanning stretches (helical) occupy residues 33–53 (RALC…MFYW), 198–218 (LLVK…LTLW), 222–242 (GYIE…VLSV), 401–421 (FMVF…GVYM), and 433–453 (MALI…LTIG). The active-site 4-aspartylphosphate intermediate is the Asp486. Residues Asn650 and Asn817 are each glycosylated (N-linked (GlcNAc...) asparagine). Mg(2+)-binding residues include Asp848 and Asp852. The next 6 helical transmembrane spans lie at 896 to 916 (ALVS…IQFI), 933 to 950 (YLLQ…TMSI), 971 to 991 (LLLS…CTFL), 1040 to 1060 (FEGT…AFIF), 1075 to 1095 (LFSL…FCDF), and 1113 to 1133 (VSIL…EDAV).

This sequence belongs to the cation transport ATPase (P-type) (TC 3.A.3) family. Type V subfamily. In terms of tissue distribution, specifically expressed in brain and stomach.

It localises to the membrane. The catalysed reaction is ATP + H2O = ADP + phosphate + H(+). The chain is Probable cation-transporting ATPase 13A5 (Atp13a5) from Mus musculus (Mouse).